A 256-amino-acid chain; its full sequence is Trypsin alpha (256 aa).

Residues 1-22 (MLKIVILLSAVVCALGGTVPEG) form the signal peptide. The propeptide at 23-30 (LLPQLDGR) is activation peptide. The region spanning 31-254 (IVGGSATTIS…LRSWVISTAN (224 aa)) is the Peptidase S1 domain. Cysteines 56 and 72 form a disulfide. Active-site charge relay system residues include H71 and D116. Disulfide bonds link C180–C197 and C206–C230. S210 acts as the Charge relay system in catalysis.

This sequence belongs to the peptidase S1 family.

The protein localises to the secreted. It localises to the extracellular space. It catalyses the reaction Preferential cleavage: Arg-|-Xaa, Lys-|-Xaa.. The polypeptide is Trypsin alpha (alphaTry) (Drosophila erecta (Fruit fly)).